Consider the following 310-residue polypeptide: Beta-1,3-galactosyltransferase 5 (310 aa).

Residues 1–7 lie on the Cytoplasmic side of the membrane; that stretch reads MAFPKMR. A helical; Signal-anchor for type II membrane protein transmembrane segment spans residues 8–28; it reads LMYICLLVLGALCLYFSMYSL. Over 29-310 the chain is Lumenal; the sequence is NPFKEQSFVY…NSRGEDCPPV (282 aa). 3 N-linked (GlcNAc...) asparagine glycosylation sites follow: Asn130, Asn174, and Asn231.

The protein belongs to the glycosyltransferase 31 family. In terms of tissue distribution, expressed in stomach, jejunum, colon, pancreas, small intestine, testis and gastrointestinal and pancreatic cancer cell lines. Hardly detected in lung, liver, adrenal gland and peripheral blood leukocytes.

It is found in the golgi apparatus membrane. It catalyses the reaction a globoside Gb4Cer (d18:1(4E)) + UDP-alpha-D-galactose = a globoside GalGb4Cer (d18:1(4E)) + UDP + H(+). It participates in protein modification; protein glycosylation. Catalyzes the transfer of Gal to GlcNAc-based acceptors with a preference for the core3 O-linked glycan GlcNAc(beta1,3)GalNAc structure. Can use glycolipid LC3Cer as an efficient acceptor. The sequence is that of Beta-1,3-galactosyltransferase 5 from Homo sapiens (Human).